A 338-amino-acid chain; its full sequence is Nicotinate-nucleotide--dimethylbenzimidazole phosphoribosyltransferase (338 aa).

Glu305 serves as the catalytic Proton acceptor.

This sequence belongs to the CobT family.

The catalysed reaction is 5,6-dimethylbenzimidazole + nicotinate beta-D-ribonucleotide = alpha-ribazole 5'-phosphate + nicotinate + H(+). It functions in the pathway nucleoside biosynthesis; alpha-ribazole biosynthesis; alpha-ribazole from 5,6-dimethylbenzimidazole: step 1/2. In terms of biological role, catalyzes the synthesis of alpha-ribazole-5'-phosphate from nicotinate mononucleotide (NAMN) and 5,6-dimethylbenzimidazole (DMB). This Rhizobium leguminosarum bv. trifolii (strain WSM2304) protein is Nicotinate-nucleotide--dimethylbenzimidazole phosphoribosyltransferase.